The chain runs to 41 residues: Large ribosomal subunit protein bL36 (41 aa).

The protein belongs to the bacterial ribosomal protein bL36 family.

In Bartonella henselae (strain ATCC 49882 / DSM 28221 / CCUG 30454 / Houston 1) (Rochalimaea henselae), this protein is Large ribosomal subunit protein bL36.